The following is a 235-amino-acid chain: Proteasome subunit beta type-1 (235 aa).

A propeptide spanning residues 1-20 (MSRLGFEQFPDYQVPGMKHP) is cleaved from the precursor.

Belongs to the peptidase T1B family. The 26S proteasome consists of a 20S proteasome core and two 19S regulatory subunits. The 20S proteasome core is composed of 28 subunits that are arranged in four stacked rings, resulting in a barrel-shaped structure. The two end rings are each formed by seven alpha subunits, and the two central rings are each formed by seven beta subunits. The catalytic chamber with the active sites is on the inside of the barrel.

It localises to the cytoplasm. Its subcellular location is the nucleus. Its function is as follows. Non-catalytic component of the proteasome, a multicatalytic proteinase complex which is characterized by its ability to cleave peptides with Arg, Phe, Tyr, Leu, and Glu adjacent to the leaving group at neutral or slightly basic pH. The proteasome has an ATP-dependent proteolytic activity. This chain is Proteasome subunit beta type-1 (Prosbeta6), found in Drosophila melanogaster (Fruit fly).